The chain runs to 365 residues: G-protein coupled receptor 4 (365 aa).

Over 1–10 (MDNSTGTWEG) the chain is Extracellular. N-linked (GlcNAc...) asparagine glycosylation occurs at N3. The helical transmembrane segment at 11–47 (CHVDSRVDHLFPPSLYIFVIGVGLPTNCLALWAAYRQ) threads the bilayer. Cystine bridges form between C11-C260 and C92-C170. At 48 to 51 (VRQR) the chain is on the cytoplasmic side. Residues 52-82 (NELGVYLMNLSIADLLYICTLPLWVDYFLHH) form a helical membrane-spanning segment. At 83 to 87 (DNWIH) the chain is on the extracellular side. Residues 88–123 (GPGSCKLFGFIFYSNIYISIAFLCCISVDRYLAVAH) traverse the membrane as a helical segment. Residues 124–131 (PLRFARLR) are Cytoplasmic-facing. A helical transmembrane segment spans residues 132–158 (RVKTAVAVSSVVWATELGANSAPLFHD). Residues 159–174 (ELFRDRYNHTFCFEKF) lie on the Extracellular side of the membrane. The interval 159-174 (ELFRDRYNHTFCFEKF) is extracellular loop 2 (ECL2). N166 carries an N-linked (GlcNAc...) asparagine glycan. A helical transmembrane segment spans residues 175–212 (PMERWVAWMNLYRVFVGFLFPWALMLLCYRGILRAVQS). Residues 213-216 (SVST) lie on the Cytoplasmic side of the membrane. Residues 217 to 252 (ERQEKVKIKRLALSLIAIVLVCFAPYHALLLSRSAV) form a helical membrane-spanning segment. Over 253-262 (YLGRPWDCGF) the chain is Extracellular. Residues 263 to 291 (EERVFSAYHSSLAFTSLNCVADPILYCLV) form a helical membrane-spanning segment. The Cytoplasmic segment spans residues 292–365 (NEGARSDVAK…PLKVLLPPAQ (74 aa)).

It belongs to the G-protein coupled receptor 1 family.

The protein resides in the cell membrane. With respect to regulation, activated by a network of residues that connects an extracellular-facing cavity to Glu-147, a conserved charged residue buried in the transmembrane core of the receptor. Protonation likely drives conformational changes in extracellular loop 2 (ECL2), which stabilizes movement of transmembrane 3 (TM3) and a series of rearrangements that connect the extracellular-facing cavity to Glu-147, a residue only conserved in proton-sensing G-protein coupled receptors. Functionally, proton-sensing G-protein coupled receptor activated by extracellular pH, which is required to monitor pH changes and generate adaptive reactions. Activated by an optimal pH of 6.8-7.2. Ligand binding causes a conformation change that triggers signaling via guanine nucleotide-binding proteins (G proteins) and modulates the activity of downstream effectors, such as adenylate cyclase. GPR4 is mainly coupled to G(s) G proteins and mediates activation of adenylate cyclase activity. May also couple with G(q) and G(12)/G(13) G proteins. Acts as a key regulator of respiratory sensitivity to CO2/H(+) in brain retrotrapezoid nucleus neurons: acts by mediating detection of protons generated by the formation of carbonic acid in the blood, an important mechanism to impulse to breathe. Also acts as a regulator of acid secretion in the kidney collecting duct by maintaining acid-base homeostasis in the kidney. Acidosis-induced GPR4 activation increases paracellular gap formation and permeability of vascular endothelial cells, possibly through the G(12)/G(13)/Rho GTPase signaling pathway. In Rattus norvegicus (Rat), this protein is G-protein coupled receptor 4.